Here is a 318-residue protein sequence, read N- to C-terminus: NADH-ubiquinone oxidoreductase chain 1 (318 aa).

The next 8 membrane-spanning stretches (helical) occupy residues 2–22 (FLTN…FLTL), 70–90 (MFLM…IPLP), 102–122 (LLFM…SGWA), 147–167 (AIIL…TLII), 171–191 (YMWL…STLA), 222–242 (LFFL…TILF), 253–273 (ELYT…FLWI), and 294–314 (LPLT…TAAI).

It belongs to the complex I subunit 1 family.

The protein resides in the mitochondrion inner membrane. It catalyses the reaction a ubiquinone + NADH + 5 H(+)(in) = a ubiquinol + NAD(+) + 4 H(+)(out). Its function is as follows. Core subunit of the mitochondrial membrane respiratory chain NADH dehydrogenase (Complex I) that is believed to belong to the minimal assembly required for catalysis. Complex I functions in the transfer of electrons from NADH to the respiratory chain. The immediate electron acceptor for the enzyme is believed to be ubiquinone. The chain is NADH-ubiquinone oxidoreductase chain 1 (MT-ND1) from Diaemus youngi (White-winged vampire bat).